A 129-amino-acid polypeptide reads, in one-letter code: NADH-quinone oxidoreductase subunit A (129 aa).

3 helical membrane-spanning segments follow: residues 14 to 34, 67 to 87, and 95 to 115; these read LAIHVALSAGIVAAIIVVAAW, FLIAALFVIFDMEAAILFAWA, and WLGLIEAAVFIGVLLLALVYL.

Belongs to the complex I subunit 3 family. In terms of assembly, NDH-1 is composed of 14 different subunits. Subunits NuoA, H, J, K, L, M, N constitute the membrane sector of the complex.

It localises to the cell inner membrane. It catalyses the reaction a quinone + NADH + 5 H(+)(in) = a quinol + NAD(+) + 4 H(+)(out). Functionally, NDH-1 shuttles electrons from NADH, via FMN and iron-sulfur (Fe-S) centers, to quinones in the respiratory chain. The immediate electron acceptor for the enzyme in this species is believed to be ubiquinone. Couples the redox reaction to proton translocation (for every two electrons transferred, four hydrogen ions are translocated across the cytoplasmic membrane), and thus conserves the redox energy in a proton gradient. The sequence is that of NADH-quinone oxidoreductase subunit A from Rhodopseudomonas palustris (strain BisB5).